Consider the following 456-residue polypeptide: Glycerol-3-phosphate acyltransferase 4 (456 aa).

Positions 1 to 37 (MFLLLPFDSLIVNLLGISLTVLFTLLLVFIIVPAIFG) are cleaved as a signal peptide. 2 helical membrane-spanning segments follow: residues 156 to 176 (ISLR…CFLL) and 180 to 200 (IALA…VGYL). An N-linked (GlcNAc...) asparagine glycan is attached at Asn247. The short motif at 248–253 (HTSPID) is the HXXXXD motif element. N-linked (GlcNAc...) asparagine glycosylation is found at Asn327, Asn328, and Asn362.

Belongs to the 1-acyl-sn-glycerol-3-phosphate acyltransferase family.

The protein resides in the endoplasmic reticulum membrane. It carries out the reaction sn-glycerol 3-phosphate + an acyl-CoA = a 1-acyl-sn-glycero-3-phosphate + CoA. The enzyme catalyses dodecanoyl-CoA + sn-glycerol 3-phosphate = 1-dodecanoyl-sn-glycerol 3-phosphate + CoA. The catalysed reaction is sn-glycerol 3-phosphate + hexadecanoyl-CoA = 1-hexadecanoyl-sn-glycero-3-phosphate + CoA. It catalyses the reaction sn-glycerol 3-phosphate + octadecanoyl-CoA = 1-octadecanoyl-sn-glycero-3-phosphate + CoA. It carries out the reaction sn-glycerol 3-phosphate + (9Z)-octadecenoyl-CoA = 1-(9Z-octadecenoyl)-sn-glycero-3-phosphate + CoA. The enzyme catalyses (9Z,12Z)-octadecadienoyl-CoA + sn-glycerol 3-phosphate = 1-(9Z,12Z)-octadecadienoyl-sn-glycero-3-phosphate + CoA. It participates in phospholipid metabolism; CDP-diacylglycerol biosynthesis; CDP-diacylglycerol from sn-glycerol 3-phosphate: step 1/3. Its function is as follows. Converts glycerol-3-phosphate to 1-acyl-sn-glycerol-3-phosphate (lysophosphatidic acid or LPA) by incorporating an acyl moiety at the sn-1 position of the glycerol backbone. Active against both saturated and unsaturated long-chain fatty acyl-CoAs. Protects cells against lipotoxicity. This chain is Glycerol-3-phosphate acyltransferase 4, found in Pongo abelii (Sumatran orangutan).